Here is a 219-residue protein sequence, read N- to C-terminus: Probable N-acetyltransferase camello (219 aa).

2 helical membrane-spanning segments follow: residues F42–L62 and L64–G84. Residues L62 to K218 enclose the N-acetyltransferase domain.

The protein belongs to the camello family. In terms of tissue distribution, at the beginning of gastrulation, expressed in deep cells of the presumptive mesoderm. At later gastrulation stages, expressed at the interface between already involuted and preinvoluted mesoderm. At late neurula and tailbud stages, expressed in the deep mass of cells lying ventrally and laterally to the closed blastopore.

The protein resides in the golgi apparatus membrane. Functionally, plays a role in regulation of gastrulation, possibly by controlled reduction of cell adhesion which is necessary for optimal cell motility. The protein is Probable N-acetyltransferase camello of Xenopus laevis (African clawed frog).